The primary structure comprises 352 residues: Anthranilate phosphoribosyltransferase (352 aa).

5-phospho-alpha-D-ribose 1-diphosphate-binding positions include Gly83, Gly86–Asp87, Thr91, Asn93–Thr96, Lys111–Ser119, and Ala123. Gly83 provides a ligand contact to anthranilate. Ser95 contacts Mg(2+). Anthranilate is bound at residue Arg169. Mg(2+) is bound by residues Asp228 and Glu229.

It belongs to the anthranilate phosphoribosyltransferase family. Homodimer. It depends on Mg(2+) as a cofactor.

The catalysed reaction is N-(5-phospho-beta-D-ribosyl)anthranilate + diphosphate = 5-phospho-alpha-D-ribose 1-diphosphate + anthranilate. The protein operates within amino-acid biosynthesis; L-tryptophan biosynthesis; L-tryptophan from chorismate: step 2/5. Catalyzes the transfer of the phosphoribosyl group of 5-phosphorylribose-1-pyrophosphate (PRPP) to anthranilate to yield N-(5'-phosphoribosyl)-anthranilate (PRA). This Neisseria meningitidis serogroup C (strain 053442) protein is Anthranilate phosphoribosyltransferase.